Here is a 226-residue protein sequence, read N- to C-terminus: 2-C-methyl-D-erythritol 4-phosphate cytidylyltransferase (226 aa).

This sequence belongs to the IspD/TarI cytidylyltransferase family. IspD subfamily.

The enzyme catalyses 2-C-methyl-D-erythritol 4-phosphate + CTP + H(+) = 4-CDP-2-C-methyl-D-erythritol + diphosphate. The protein operates within isoprenoid biosynthesis; isopentenyl diphosphate biosynthesis via DXP pathway; isopentenyl diphosphate from 1-deoxy-D-xylulose 5-phosphate: step 2/6. In terms of biological role, catalyzes the formation of 4-diphosphocytidyl-2-C-methyl-D-erythritol from CTP and 2-C-methyl-D-erythritol 4-phosphate (MEP). The protein is 2-C-methyl-D-erythritol 4-phosphate cytidylyltransferase of Bacillus cereus (strain ATCC 14579 / DSM 31 / CCUG 7414 / JCM 2152 / NBRC 15305 / NCIMB 9373 / NCTC 2599 / NRRL B-3711).